Consider the following 352-residue polypeptide: Quinolinate synthase (352 aa).

2 residues coordinate iminosuccinate: His-48 and Ser-69. Cys-114 contributes to the [4Fe-4S] cluster binding site. Iminosuccinate is bound by residues 140–142 (YAN) and Ser-157. Cys-201 is a binding site for [4Fe-4S] cluster. Residues 227 to 229 (HPE) and Thr-244 contribute to the iminosuccinate site. Cys-298 provides a ligand contact to [4Fe-4S] cluster.

It belongs to the quinolinate synthase family. Type 1 subfamily. [4Fe-4S] cluster serves as cofactor.

It is found in the cytoplasm. The enzyme catalyses iminosuccinate + dihydroxyacetone phosphate = quinolinate + phosphate + 2 H2O + H(+). It participates in cofactor biosynthesis; NAD(+) biosynthesis; quinolinate from iminoaspartate: step 1/1. Catalyzes the condensation of iminoaspartate with dihydroxyacetone phosphate to form quinolinate. The protein is Quinolinate synthase of Pseudomonas putida (strain GB-1).